Here is a 149-residue protein sequence, read N- to C-terminus: Large ribosomal subunit protein eL19 (149 aa).

Residues 45–130 are disordered; it reads VDEGAIQAKD…RDLYDKAGGG (86 aa). Residues 58-85 are compositionally biased toward basic residues; sequence NSRGRARERQKKRAYGHQKGAGSRKGKA. Residues 90–113 are compositionally biased toward basic and acidic residues; the sequence is NSKEDWESRIRAQRTKLRELRDEG.

The protein belongs to the eukaryotic ribosomal protein eL19 family. As to quaternary structure, part of the 50S ribosomal subunit.

Its function is as follows. Binds to the 23S rRNA. Located at the polypeptide exit tunnel on the outside of the subunit. The polypeptide is Large ribosomal subunit protein eL19 (Haloarcula marismortui (strain ATCC 43049 / DSM 3752 / JCM 8966 / VKM B-1809) (Halobacterium marismortui)).